The primary structure comprises 176 residues: NAD(P)H-quinone oxidoreductase subunit 6, chloroplastic (176 aa).

The next 5 helical transmembrane spans lie at 10–30 (FLLVFLGSGLILGGLGVVLLT), 32–52 (PIYSAFSLGLVLVCISLFYIP), 61–81 (AQLLIYVGAINVLIIFAVMFM), 92–112 (LWTVGDGVTSLLCTSIFVSLI), and 152–172 (FFLPFELISIILLVALIGAIA).

Belongs to the complex I subunit 6 family. As to quaternary structure, NDH is composed of at least 16 different subunits, 5 of which are encoded in the nucleus.

It is found in the plastid. It localises to the chloroplast thylakoid membrane. It carries out the reaction a plastoquinone + NADH + (n+1) H(+)(in) = a plastoquinol + NAD(+) + n H(+)(out). It catalyses the reaction a plastoquinone + NADPH + (n+1) H(+)(in) = a plastoquinol + NADP(+) + n H(+)(out). Its function is as follows. NDH shuttles electrons from NAD(P)H:plastoquinone, via FMN and iron-sulfur (Fe-S) centers, to quinones in the photosynthetic chain and possibly in a chloroplast respiratory chain. The immediate electron acceptor for the enzyme in this species is believed to be plastoquinone. Couples the redox reaction to proton translocation, and thus conserves the redox energy in a proton gradient. This chain is NAD(P)H-quinone oxidoreductase subunit 6, chloroplastic (ndhG), found in Platanus occidentalis (Sycamore).